The following is a 474-amino-acid chain: Glycogen synthase (474 aa).

Lys-15 is an ADP-alpha-D-glucose binding site.

The protein belongs to the glycosyltransferase 1 family. Bacterial/plant glycogen synthase subfamily.

It carries out the reaction [(1-&gt;4)-alpha-D-glucosyl](n) + ADP-alpha-D-glucose = [(1-&gt;4)-alpha-D-glucosyl](n+1) + ADP + H(+). It functions in the pathway glycan biosynthesis; glycogen biosynthesis. Its function is as follows. Synthesizes alpha-1,4-glucan chains using ADP-glucose. This is Glycogen synthase from Chlamydia trachomatis serovar A (strain ATCC VR-571B / DSM 19440 / HAR-13).